Consider the following 101-residue polypeptide: CRISPR-associated endoribonuclease Cas2 (101 aa).

Mg(2+) is bound at residue D8.

This sequence belongs to the CRISPR-associated endoribonuclease Cas2 protein family. In terms of assembly, homodimer, forms a heterotetramer with a Cas1 homodimer. The cofactor is Mg(2+).

Functionally, CRISPR (clustered regularly interspaced short palindromic repeat), is an adaptive immune system that provides protection against mobile genetic elements (viruses, transposable elements and conjugative plasmids). CRISPR clusters contain sequences complementary to antecedent mobile elements and target invading nucleic acids. CRISPR clusters are transcribed and processed into CRISPR RNA (crRNA). Functions as a ssRNA-specific endoribonuclease. Involved in the integration of spacer DNA into the CRISPR cassette. The sequence is that of CRISPR-associated endoribonuclease Cas2 from Lacticaseibacillus rhamnosus (strain ATCC 53103 / LMG 18243 / GG) (Lactobacillus rhamnosus).